The sequence spans 220 residues: Iron-sulfur cluster repair protein YtfE (220 aa).

It belongs to the RIC family. YtfE subfamily. Homodimer.

Its subcellular location is the cytoplasm. Its function is as follows. Di-iron-containing protein involved in the repair of iron-sulfur clusters damaged by oxidative and nitrosative stress conditions. The sequence is that of Iron-sulfur cluster repair protein YtfE from Escherichia coli O8 (strain IAI1).